The chain runs to 134 residues: L-ectoine synthase (134 aa).

This sequence belongs to the ectoine synthase family.

The catalysed reaction is (2S)-4-acetamido-2-aminobutanoate = L-ectoine + H2O. Its pathway is amine and polyamine biosynthesis; ectoine biosynthesis; L-ectoine from L-aspartate 4-semialdehyde: step 3/3. Functionally, catalyzes the circularization of gamma-N-acetyl-alpha,gamma-diaminobutyric acid (ADABA) to ectoine (1,4,5,6-tetrahydro-2-methyl-4-pyrimidine carboxylic acid), which is an excellent osmoprotectant. In Shouchella clausii (strain KSM-K16) (Alkalihalobacillus clausii), this protein is L-ectoine synthase.